The sequence spans 634 residues: Threonine--tRNA ligase (634 aa).

The region spanning 1-61 (MINIRFPDGS…NSNCELRLIT (61 aa)) is the TGS domain. Positions 241–532 (DHRKIGKVLD…LIEHYAGNLP (292 aa)) are catalytic. Zn(2+)-binding residues include Cys-332, His-383, and His-509.

The protein belongs to the class-II aminoacyl-tRNA synthetase family. Homodimer. Requires Zn(2+) as cofactor.

It is found in the cytoplasm. The enzyme catalyses tRNA(Thr) + L-threonine + ATP = L-threonyl-tRNA(Thr) + AMP + diphosphate + H(+). In terms of biological role, catalyzes the attachment of threonine to tRNA(Thr) in a two-step reaction: L-threonine is first activated by ATP to form Thr-AMP and then transferred to the acceptor end of tRNA(Thr). Also edits incorrectly charged L-seryl-tRNA(Thr). This chain is Threonine--tRNA ligase, found in Francisella tularensis subsp. holarctica (strain OSU18).